A 92-amino-acid chain; its full sequence is DNA-binding protein HU (92 aa).

The disordered stretch occupies residues 58 to 92 (AGTARNPRTGETVNRPASKTARFQVGEGLKSSLNS).

It belongs to the bacterial histone-like protein family. In terms of assembly, homodimer.

Functionally, histone-like DNA-binding protein which is capable of wrapping DNA to stabilize it, and thus to prevent its denaturation under extreme environmental conditions. The protein is DNA-binding protein HU (hup) of Caulobacter vibrioides (strain ATCC 19089 / CIP 103742 / CB 15) (Caulobacter crescentus).